Here is a 343-residue protein sequence, read N- to C-terminus: L-threonine 3-dehydrogenase (343 aa).

A Zn(2+)-binding site is contributed by Cys38. Residues Thr40 and His43 each act as charge relay system in the active site. The Zn(2+) site is built by His63, Glu64, Cys93, Cys96, Cys99, and Cys107. NAD(+) contacts are provided by residues Ile175, Asp195, Arg200, 262 to 264, and 286 to 287; these read LGI and IY.

Belongs to the zinc-containing alcohol dehydrogenase family. In terms of assembly, homotetramer. It depends on Zn(2+) as a cofactor.

It localises to the cytoplasm. It carries out the reaction L-threonine + NAD(+) = (2S)-2-amino-3-oxobutanoate + NADH + H(+). The protein operates within amino-acid degradation; L-threonine degradation via oxydo-reductase pathway; glycine from L-threonine: step 1/2. Its function is as follows. Catalyzes the NAD(+)-dependent oxidation of L-threonine to 2-amino-3-ketobutyrate. This chain is L-threonine 3-dehydrogenase, found in Pectobacterium carotovorum subsp. carotovorum (strain PC1).